A 705-amino-acid chain; its full sequence is uncharacterized protein (705 aa).

The zn(2)-C6 fungal-type DNA-binding region spans 24–52 (CHFCRVRKLKCDRVRPFCGSCSSRNRKQC).

Its subcellular location is the nucleus. This is an uncharacterized protein from Saccharomyces cerevisiae (strain ATCC 204508 / S288c) (Baker's yeast).